The sequence spans 459 residues: MFS-type transporter SLC18B1 (459 aa).

Position 1 is an N-acetylmethionine (Met-1). Positions 1–10 (MDEAGSPAPA) are enriched in low complexity. The disordered stretch occupies residues 1–27 (MDEAGSPAPAGTGGGDDPGGSTRETSR). The Cytoplasmic portion of the chain corresponds to 1-33 (MDEAGSPAPAGTGGGDDPGGSTRETSRRLSREQ). Ser-21 bears the Phosphoserine mark. Residues 34–54 (IFVLVSAASMNLGCMMTYSIL) traverse the membrane as a helical segment. Over 55-70 (GPFFPKEAEKKGASNT) the chain is Extracellular. A helical membrane pass occupies residues 71–91 (MIGMIFGCYALFELLASLVFG). Residues 92-100 (KYLVHIGAK) are Cytoplasmic-facing. Residues 101–121 (FMFIAGMFVSGGVTILFGVLD) form a helical membrane-spanning segment. At 122–127 (QLPEGP) the chain is on the extracellular side. A helical transmembrane segment spans residues 128 to 148 (IFIAMCFLVRIVDAIGFGAAI). At 149-167 (TASSSILAKAFPNNVATVM) the chain is on the cytoplasmic side. A helical transmembrane segment spans residues 168-188 (GSLEVFSGLGLVAGPPLGGLL). The Extracellular portion of the chain corresponds to 189-195 (YQSFGYE). The helical transmembrane segment at 196–216 (VPFIFLGCIVLLMIPLNLYIL) threads the bilayer. Residues 217–235 (PSYAQESDPGKQSFWKLVT) are Cytoplasmic-facing. The chain crosses the membrane as a helical span at residues 236–256 (LPKMGLLAFVIISLSSCFGFL). Topologically, residues 257–274 (DPTLSLFVMEKFSLSTGY) are extracellular. A helical transmembrane segment spans residues 275–295 (VGLVFLGLSLSYAISSPLFGL). Residues 296–306 (LSDKMPTLRKW) are Cytoplasmic-facing. Residues 307-327 (LLVFGNLITAGCYMLLGPVPL) form a helical membrane-spanning segment. Residues 328-333 (LHIKSQ) are Extracellular-facing. Residues 334–354 (LWLLVLVLVVNGISAGMSIIP) traverse the membrane as a helical segment. Residues 355–379 (TFPEMLSCAYANGFEDSISTLGLVS) lie on the Cytoplasmic side of the membrane. Residues 380–400 (GLFGAMWSVGAFMGPILGGFL) traverse the membrane as a helical segment. Residues 401–409 (CEKIGFEWA) lie on the Extracellular side of the membrane. A helical transmembrane segment spans residues 410-430 (AAMQGLWTLLSGVSMALFYLW). The Cytoplasmic segment spans residues 431–459 (EDSTARRRSKAQNSLGTEEERAALLPNDT). Residues 440 to 459 (KAQNSLGTEEERAALLPNDT) form a disordered region.

The protein belongs to the major facilitator superfamily. As to expression, widely expressed, with highest expression in the lung, pancreas and kidney. High expression in the CNS, particularly in the hypothalamus, the thalamus and the cerebellum. In the forebrain, abundantly expressed in the telencephalon, especially in the cerebral cortex layers, except layer 1, as well as in the induseum griseum, the piriform area, the taenia tecta, dorsal part and in the entorhinal area, lateral part. Lower levels in the bed anterior olfactory nucleus, posteroventral part and in layer two of the olfactory tubercle. In the amygdala, high levels observed in the intercalated nucleus and the medial nucleus. In the diencephalon, expressed in the nuclei in both the hypothalamus and thalamus. Among the hypothalamic areas, strongest expression in the arcuate nucleus and in the ventromedial nucleus, as well as in the suprachiasmatic nucleus, anterior nucleus, especially in its central part, and in the magnocellular division of the paraventricular nucleus. In the thalamus, highest levels in the medial habenula. Expression also observed in the paraventricular thalamic nucleus, parataenial nucleus, central medial nucleus, intermediodorsal nucleus and lateral dorsal nucleus. In the hindbrain, detected in the cerebellum and in the pons. In the midbrain and the medulla, expression levels were modest. In the midbrain, highest expression in the periaqueductal gray and all subdivisions of the interpeduncular nucleus, except for the caudal part. In the pons, the strongest labeling was seen in the nucleus incertus and in the tegmental nucleus. Expressed in bone marrow-derived mast cells (at protein level).

The protein localises to the cytoplasmic vesicle. It localises to the secretory vesicle membrane. Its subcellular location is the secretory vesicle. The protein resides in the synaptic vesicle membrane. It catalyses the reaction spermine(in) + n H(+)(out) = spermine(out) + n H(+)(in). It carries out the reaction spermidine(in) + n H(+)(out) = spermidine(out) + n H(+)(in). The catalysed reaction is serotonin(in) + n H(+)(out) = serotonin(out) + n H(+)(in). Proton-coupled polyamine antiporter involved in the translocation of polyamines from cytosol into secretory vesicles prior to their release via exocytosis. Uses the electrochemical proton gradient generated by a V-type proton-pumping ATPase to couple the efflux of protons with the uptake of a polyamine molecule. Facilitates vesicular storage of spermine and spermidine in astrocytes with an impact on glutamatergic neuronal transmission and memory formation. Upon antigen stimulation, regulates polyamine accumulation and release in mast cell secretory granules, which in turn potentiates mast cell degranulation and histamine secretion. The polypeptide is MFS-type transporter SLC18B1 (Mus musculus (Mouse)).